The primary structure comprises 41 residues: Photosystem II reaction center protein Y (41 aa).

A helical transmembrane segment spans residues 7–25 (VAIVLAPIAVAAGWAAFNI).

The protein belongs to the PsbY family. As to quaternary structure, PSII is composed of 1 copy each of membrane proteins PsbA, PsbB, PsbC, PsbD, PsbE, PsbF, PsbH, PsbI, PsbJ, PsbK, PsbL, PsbM, PsbT, PsbX, PsbY, PsbZ, Psb30/Ycf12, peripheral proteins PsbO, CyanoQ (PsbQ), PsbU, PsbV and a large number of cofactors. It forms dimeric complexes.

It is found in the cellular thylakoid membrane. Its function is as follows. Loosely associated component of the core of photosystem II (PSII), it is not always seen in crystals. PSII is a light-driven water plastoquinone oxidoreductase, using light energy to abstract electrons from H(2)O, generating a proton gradient subsequently used for ATP formation. This chain is Photosystem II reaction center protein Y, found in Nostoc sp. (strain PCC 7120 / SAG 25.82 / UTEX 2576).